Consider the following 340-residue polypeptide: Photosystem II assembly lipoprotein Ycf48 (340 aa).

The first 26 residues, Met1–Gly26, serve as a signal peptide directing secretion. Cys27 is lipidated: N-palmitoyl cysteine. Cys27 carries S-diacylglycerol cysteine lipidation.

Belongs to the Ycf48 family. Part of early PSII assembly complexes which includes D1 (psbA) and PsbI; not found in mature PSII. Binds to the lumenal side of PSII complexes. Interacts with YidC.

The protein resides in the cellular thylakoid membrane. In terms of biological role, a factor required for optimal assembly of photosystem II (PSII), acting in the early stages of PSII assembly. Also plays a role in replacement of photodamaged D1 (psbA). Assists YidC in synthesis of chlorophyll-binding proteins. The sequence is that of Photosystem II assembly lipoprotein Ycf48 from Picosynechococcus sp. (strain ATCC 27264 / PCC 7002 / PR-6) (Agmenellum quadruplicatum).